A 461-amino-acid polypeptide reads, in one-letter code: Glycerol-3-phosphate acyltransferase, chloroplastic (461 aa).

A chloroplast-targeting transit peptide spans 1 to 96; the sequence is MSMTGSSAYY…SPPNMSASVS (96 aa). A compositionally biased stretch (low complexity) spans 47–76; the sequence is LLSSTSSSSSSSISLRSSTAPSPSCSSVTP. Residues 47–88 form a disordered region; it reads LLSSTSSSSSSSISLRSSTAPSPSCSSVTPKDNCLASAKHSP. The HXXXXD motif signature appears at 231–236; it reads HQTEAD.

It belongs to the GPAT/DAPAT family.

The protein resides in the plastid. It is found in the chloroplast stroma. It catalyses the reaction sn-glycerol 3-phosphate + an acyl-CoA = a 1-acyl-sn-glycero-3-phosphate + CoA. It functions in the pathway phospholipid metabolism; CDP-diacylglycerol biosynthesis; CDP-diacylglycerol from sn-glycerol 3-phosphate: step 1/3. Esterifies acyl-group from acyl-ACP to the sn-1 position of glycerol-3-phosphate. The enzyme from chilling-resistant plants discriminates against non-fluid palmitic acid and selects oleic acid whereas the enzyme from sensitive plants accepts both fatty acids. The sequence is that of Glycerol-3-phosphate acyltransferase, chloroplastic (PLSB) from Phaseolus vulgaris (Kidney bean).